We begin with the raw amino-acid sequence, 231 residues long: MAKRGKKYLEAVKLIDRDQAYQVEEALELVKKASVAKFDETVEVAVRLGVDPKKADQQIRGAVVLPNGTGKTQRVLVFAKGEKAKEAEAAGADYVGDEDCINKISQGWFDFDVIVATPDMMAQVGKLGRVLGPKGLMPNPKTGTVTFEVEKAVNDIKAGKVEYRVDKAGNIHVPIGKVSFDTAKLAENFETIIDTLVKAKPAAAKGTYLKNIAVSSTMGPGVKVSTASFGK.

It belongs to the universal ribosomal protein uL1 family. As to quaternary structure, part of the 50S ribosomal subunit.

In terms of biological role, binds directly to 23S rRNA. The L1 stalk is quite mobile in the ribosome, and is involved in E site tRNA release. Protein L1 is also a translational repressor protein, it controls the translation of the L11 operon by binding to its mRNA. This chain is Large ribosomal subunit protein uL1, found in Halalkalibacterium halodurans (strain ATCC BAA-125 / DSM 18197 / FERM 7344 / JCM 9153 / C-125) (Bacillus halodurans).